The following is a 229-amino-acid chain: Cytidylate kinase (229 aa).

12–20 (GPSGAGKGT) contacts ATP.

It belongs to the cytidylate kinase family. Type 1 subfamily.

It is found in the cytoplasm. The catalysed reaction is CMP + ATP = CDP + ADP. The enzyme catalyses dCMP + ATP = dCDP + ADP. The polypeptide is Cytidylate kinase (Pseudomonas aeruginosa (strain LESB58)).